The following is a 391-amino-acid chain: Succinate--CoA ligase [ADP-forming] subunit beta (391 aa).

The ATP-grasp domain maps to 9-237 (RDLFEKHGVP…RATTDPLELR (229 aa)). ATP-binding positions include Lys-46, 53–55 (GRG), Ala-95, and Glu-100. The Mg(2+) site is built by Asn-192 and Asp-206. Substrate is bound by residues Asn-257 and 320–322 (GIT).

The protein belongs to the succinate/malate CoA ligase beta subunit family. Heterotetramer of two alpha and two beta subunits. Mg(2+) serves as cofactor.

The enzyme catalyses succinate + ATP + CoA = succinyl-CoA + ADP + phosphate. The catalysed reaction is GTP + succinate + CoA = succinyl-CoA + GDP + phosphate. It participates in carbohydrate metabolism; tricarboxylic acid cycle; succinate from succinyl-CoA (ligase route): step 1/1. Functionally, succinyl-CoA synthetase functions in the citric acid cycle (TCA), coupling the hydrolysis of succinyl-CoA to the synthesis of either ATP or GTP and thus represents the only step of substrate-level phosphorylation in the TCA. The beta subunit provides nucleotide specificity of the enzyme and binds the substrate succinate, while the binding sites for coenzyme A and phosphate are found in the alpha subunit. The chain is Succinate--CoA ligase [ADP-forming] subunit beta from Cutibacterium acnes (strain DSM 16379 / KPA171202) (Propionibacterium acnes).